The chain runs to 673 residues: Bifunctional lycopene cyclase/phytoene synthase (673 aa).

The segment at 1–251 (MTALAYYQIH…IVLGLSACDH (251 aa)) is lycopene beta-cyclase. Helical transmembrane passes span 9 to 29 (IHLIYTLPILGLLGLLTSPIL), 36 to 56 (KISILVFIAFSATTPWDSWII), 81 to 101 (YEEYAFFVIQTVITGLVYVLA), 117 to 137 (SALSLALKALIPLPIIYLFTA), 157 to 177 (LSLLITPPTMLLAALSGEYAF), 187 to 207 (TIAAIMIPTVYLIWVDYVAVG), and 226 to 246 (VLPIEEAMFFLLTNLMIVLGL). The interval 258–673 (LHGRTIYGNK…SVVMSGWEGQ (416 aa)) is phytoene synthase. The segment at 376-399 (KILSSPLLPPSHPSRPTGMYPLPP) is disordered.

It in the N-terminal section; belongs to the lycopene beta-cyclase family. This sequence in the C-terminal section; belongs to the phytoene/squalene synthase family.

Its subcellular location is the membrane. The catalysed reaction is all-trans-lycopene = gamma-carotene. It carries out the reaction gamma-carotene = all-trans-beta-carotene. The enzyme catalyses 2 (2E,6E,10E)-geranylgeranyl diphosphate = 15-cis-phytoene + 2 diphosphate. The protein operates within carotenoid biosynthesis; beta-carotene biosynthesis. Its pathway is carotenoid biosynthesis; phytoene biosynthesis; all-trans-phytoene from geranylgeranyl diphosphate: step 1/1. Functionally, bifunctional enzyme that catalyzes the reactions from geranylgeranyl diphosphate to phytoene (phytoene synthase) and lycopene to beta-carotene via the intermediate gamma-carotene (lycopene cyclase). The cyclase preferentially catalyzes the symmetric cyclization of both ends of the substrate to produce dicyclic carotenoids. Beta-carotene is further processed to the acidic carotenoid astaxanthin. The chain is Bifunctional lycopene cyclase/phytoene synthase from Phaffia rhodozyma (Yeast).